Consider the following 327-residue polypeptide: Chromatin modification-related protein eaf3 (327 aa).

A Tudor-knot domain is found at 13–66; that stretch reads ERVLCFHHEILYEAKILDLRHTDPDDRKSPYEYLVHYKGWKNTWDDWVPQDRLR. Positions 85–132 are disordered; that stretch reads AALRQKSTKTSLKKKGGSDHSSARGSEERQTSVPGRGTKRARDNDIEK. The segment covering 100–114 has biased composition (basic and acidic residues); that stretch reads GGSDHSSARGSEERQ. Residues 138-312 enclose the MRG domain; sequence TRPSVRIVMP…ASNEYIEKSR (175 aa).

This sequence belongs to the MRG family. Component of the NuA4 histone acetyltransferase complex.

Its subcellular location is the nucleus. In terms of biological role, involved in deacetylation of histones, chromatin assembly and chromosome segregation. May act as a transcriptional oscillator, directing histone deacetylases to specific chromosomal domains. Component of the NuA4 histone acetyltransferase complex which is involved in transcriptional activation of selected genes principally by acetylation of nucleosomal histone H4 and H2A. The NuA4 complex is also involved in DNA repair. This chain is Chromatin modification-related protein eaf3 (eaf3), found in Emericella nidulans (strain FGSC A4 / ATCC 38163 / CBS 112.46 / NRRL 194 / M139) (Aspergillus nidulans).